The chain runs to 280 residues: 2-dehydro-3-deoxyphosphooctonate aldolase (280 aa).

Belongs to the KdsA family.

The protein resides in the cytoplasm. The enzyme catalyses D-arabinose 5-phosphate + phosphoenolpyruvate + H2O = 3-deoxy-alpha-D-manno-2-octulosonate-8-phosphate + phosphate. It functions in the pathway carbohydrate biosynthesis; 3-deoxy-D-manno-octulosonate biosynthesis; 3-deoxy-D-manno-octulosonate from D-ribulose 5-phosphate: step 2/3. The protein operates within bacterial outer membrane biogenesis; lipopolysaccharide biosynthesis. This chain is 2-dehydro-3-deoxyphosphooctonate aldolase, found in Rhizobium meliloti (strain 1021) (Ensifer meliloti).